Consider the following 162-residue polypeptide: NADH-quinone oxidoreductase subunit I (162 aa).

4Fe-4S ferredoxin-type domains lie at 53-83 (LRRY…IESE) and 93-122 (TRYD…ETRV). Residues cysteine 63, cysteine 66, cysteine 69, cysteine 73, cysteine 102, cysteine 105, cysteine 108, and cysteine 112 each contribute to the [4Fe-4S] cluster site.

The protein belongs to the complex I 23 kDa subunit family. As to quaternary structure, NDH-1 is composed of 14 different subunits. Subunits NuoA, H, J, K, L, M, N constitute the membrane sector of the complex. Requires [4Fe-4S] cluster as cofactor.

The protein resides in the cell inner membrane. It catalyses the reaction a quinone + NADH + 5 H(+)(in) = a quinol + NAD(+) + 4 H(+)(out). NDH-1 shuttles electrons from NADH, via FMN and iron-sulfur (Fe-S) centers, to quinones in the respiratory chain. The immediate electron acceptor for the enzyme in this species is believed to be ubiquinone. Couples the redox reaction to proton translocation (for every two electrons transferred, four hydrogen ions are translocated across the cytoplasmic membrane), and thus conserves the redox energy in a proton gradient. This is NADH-quinone oxidoreductase subunit I from Nitrosomonas eutropha (strain DSM 101675 / C91 / Nm57).